A 172-amino-acid polypeptide reads, in one-letter code: MRIYKDIITGDEMFSDTYKVKLVDEVIYEVTGKLVSRTQGDIQIDGFNPSAEEADEGTDSNVETGVDIVLNHRLVETYAFGDKKSYTLYLKDYMKKLVAKLEEKAPDQVDIFKTNMNKVMKDILARFKELQFFTGESMDCDGMVAMMEYRKVDETEIPIMMFFKHGLEEEKF.

The TCTP domain occupies 1 to 172; the sequence is MRIYKDIITG…FKHGLEEEKF (172 aa).

Belongs to the TCTP family.

The protein localises to the cytoplasm. Functionally, involved in calcium binding and microtubule stabilization. This chain is Translationally-controlled tumor protein homolog (Tctp), found in Lonomia obliqua (Moth).